Here is a 295-residue protein sequence, read N- to C-terminus: uncharacterized protein (295 aa).

Residues 11-25 and Thr101 contribute to the NAD(+) site; that span reads GYIGLGNQGAPMAKR. Lys176 is a catalytic residue. Residue Lys252 participates in NAD(+) binding.

This sequence belongs to the HIBADH-related family.

This is an uncharacterized protein from Mycobacterium tuberculosis (strain CDC 1551 / Oshkosh).